The primary structure comprises 456 residues: Putrescine--pyruvate aminotransferase (456 aa).

Residue Tyr-156 coordinates substrate. Asp-262 contacts pyridoxal 5'-phosphate. Lys-291 is modified (N6-(pyridoxal phosphate)lysine). 2 residues coordinate substrate: Gly-322 and Arg-417.

It belongs to the class-III pyridoxal-phosphate-dependent aminotransferase family. Pyridoxal 5'-phosphate is required as a cofactor.

It carries out the reaction putrescine + pyruvate = 4-aminobutanal + L-alanine. It participates in amine and polyamine degradation; putrescine degradation; 4-aminobutanal from putrescine (transaminase route). In terms of biological role, involved in the putrescine catabolism. Catalyzes the transfer of the amino group from putrescine to pyruvate to yield 4-aminobutanal and alanine. This is Putrescine--pyruvate aminotransferase from Pseudomonas aeruginosa (strain ATCC 15692 / DSM 22644 / CIP 104116 / JCM 14847 / LMG 12228 / 1C / PRS 101 / PAO1).